A 331-amino-acid chain; its full sequence is Ribosomal RNA small subunit methyltransferase C (331 aa).

The protein belongs to the methyltransferase superfamily. RsmC family. Monomer.

It localises to the cytoplasm. The catalysed reaction is guanosine(1207) in 16S rRNA + S-adenosyl-L-methionine = N(2)-methylguanosine(1207) in 16S rRNA + S-adenosyl-L-homocysteine + H(+). Its function is as follows. Specifically methylates the guanine in position 1207 of 16S rRNA in the 30S particle. The protein is Ribosomal RNA small subunit methyltransferase C of Ectopseudomonas mendocina (strain ymp) (Pseudomonas mendocina).